The chain runs to 264 residues: Phosphatidylglycerol--prolipoprotein diacylglyceryl transferase (264 aa).

4 helical membrane-spanning segments follow: residues 17–37 (LAIH…YLLG), 57–77 (LIFY…VLFY), 89–109 (IAFL…VILV), and 118–138 (GVSF…GLGA). Arginine 140 contributes to the a 1,2-diacyl-sn-glycero-3-phospho-(1'-sn-glycerol) binding site. 3 consecutive transmembrane segments (helical) span residues 173–193 (PSQL…LWWF), 201–221 (GQVS…VEFT), and 237–257 (MGQW…VLTA).

This sequence belongs to the Lgt family.

The protein localises to the cell inner membrane. The enzyme catalyses L-cysteinyl-[prolipoprotein] + a 1,2-diacyl-sn-glycero-3-phospho-(1'-sn-glycerol) = an S-1,2-diacyl-sn-glyceryl-L-cysteinyl-[prolipoprotein] + sn-glycerol 1-phosphate + H(+). It participates in protein modification; lipoprotein biosynthesis (diacylglyceryl transfer). Its function is as follows. Catalyzes the transfer of the diacylglyceryl group from phosphatidylglycerol to the sulfhydryl group of the N-terminal cysteine of a prolipoprotein, the first step in the formation of mature lipoproteins. This Bordetella avium (strain 197N) protein is Phosphatidylglycerol--prolipoprotein diacylglyceryl transferase.